Here is a 232-residue protein sequence, read N- to C-terminus: Small ribosomal subunit protein uS2 (232 aa).

Belongs to the universal ribosomal protein uS2 family.

This is Small ribosomal subunit protein uS2 from Syntrophomonas wolfei subsp. wolfei (strain DSM 2245B / Goettingen).